A 217-amino-acid chain; its full sequence is UPF0502 protein Smlt0097 (217 aa).

This sequence belongs to the UPF0502 family.

The protein is UPF0502 protein Smlt0097 of Stenotrophomonas maltophilia (strain K279a).